Reading from the N-terminus, the 463-residue chain is L-seryl-tRNA(Sec) selenium transferase (463 aa).

Lys-295 bears the N6-(pyridoxal phosphate)lysine mark.

The protein belongs to the SelA family. As to quaternary structure, homodecamer; pentamer of dimers. Binds only one seryl-tRNA(Sec) per dimer. Pyridoxal 5'-phosphate serves as cofactor.

It localises to the cytoplasm. The enzyme catalyses L-seryl-tRNA(Sec) + selenophosphate + H(+) = L-selenocysteinyl-tRNA(Sec) + phosphate. It functions in the pathway aminoacyl-tRNA biosynthesis; selenocysteinyl-tRNA(Sec) biosynthesis; selenocysteinyl-tRNA(Sec) from L-seryl-tRNA(Sec) (bacterial route): step 1/1. Converts seryl-tRNA(Sec) to selenocysteinyl-tRNA(Sec) required for selenoprotein biosynthesis. This chain is L-seryl-tRNA(Sec) selenium transferase, found in Escherichia coli (strain K12 / MC4100 / BW2952).